A 788-amino-acid chain; its full sequence is Integrin beta-3 (788 aa).

The N-terminal stretch at 1–26 (MRARPRPRPLWATVLALGALAGVGVG) is a signal peptide. Topologically, residues 27–718 (GPNICTTRGV…EEPECPKGPD (692 aa)) are extracellular. A PSI domain is found at 30 to 76 (ICTTRGVSSCQQCLAVSPMCAWCSDEALPLGSPRCDLKENLLKDNCA). 19 disulfide bridges follow: Cys31–Cys49, Cys39–Cys461, Cys42–Cys64, Cys52–Cys75, Cys203–Cys210, Cys258–Cys299, Cys400–Cys412, Cys432–Cys459, Cys463–Cys483, Cys474–Cys486, Cys488–Cys497, Cys499–Cys529, Cys512–Cys527, Cys521–Cys532, Cys534–Cys547, Cys549–Cys570, Cys554–Cys568, Cys562–Cys573, and Cys575–Cys584. N-linked (GlcNAc...) asparagine glycosylation occurs at Asn125. The region spanning 135-377 (DYPVDIYYLM…QLIVDAYGKI (243 aa)) is the VWFA domain. Residues Ser147 and Ser149 each coordinate Mg(2+). Ca(2+)-binding residues include Ser149, Asp152, Asp153, and Asp184. The segment at 203 to 210 (CYDMKTTC) is involved in CX3CL1-, NRG1-, FGF1- and IGF1-binding. Positions 241, 243, 245, 246, and 277 each coordinate Ca(2+). Glu246 is a binding site for Mg(2+). The CX3CL1-binding stretch occupies residues 293 to 313 (QPNDGQCHVGSDNHYSASTTM). Residue Asn346 is glycosylated (N-linked (GlcNAc...) asparagine). Met361 provides a ligand contact to Ca(2+). The N-linked (GlcNAc...) asparagine glycan is linked to Asn397. 4 consecutive I-EGF domains span residues 463–498 (CQAQAEPNSHRCNNGNGTFECGVCRCGPGWLGSQCE), 499–548 (CSEE…KYCE), 549–585 (CDDFSCVRYKGEMCSGHGQCSCGDCLCDSDWTGYYCN), and 586–625 (CTTRTDTCMSSNGLLCSGRGKCECGSCVCIQPGSYGDTCE). Asn478 carries N-linked (GlcNAc...) asparagine glycosylation. N-linked (GlcNAc...) asparagine glycosylation is present at Asn585. Cystine bridges form between Cys586–Cys609, Cys593–Cys607, Cys601–Cys612, Cys614–Cys624, Cys627–Cys630, Cys634–Cys681, Cys640–Cys661, Cys643–Cys657, and Cys689–Cys713. An N-linked (GlcNAc...) asparagine glycan is attached at Asn680. A helical transmembrane segment spans residues 719 to 741 (ILVVLLSVMGAILLIGLAALLIW). Topologically, residues 742 to 788 (KLLITIHDRKEFAKFEEERARAKWDTANNPLYKEATSTFTNITYRGT) are cytoplasmic. Thr767 is modified (phosphothreonine). At Tyr773 the chain carries Phosphotyrosine. An LIR motif is present at residues 777–783 (TSTFTNI). At Thr779 the chain carries Phosphothreonine; by PDPK1 and PKB/AKT1; in vitro. Phosphotyrosine is present on Tyr785.

Belongs to the integrin beta chain family. As to quaternary structure, heterodimer of an alpha and a beta subunit. Beta-3 (ITGB3) associates with either alpha-IIb (ITGA2B) or alpha-V (ITGAV). Isoform Beta-3C interacts with FLNB. Interacts with COMP. Interacts with PDIA6 following platelet stimulation. Interacts with SYK; upon activation by ITGB3 promotes platelet adhesion. Interacts with MYO10. Interacts with DAB2. Interacts with FERMT2. Interacts with EMP2; regulates the levels of the heterodimer ITGA5:ITGB3 integrin expression on the plasma membrane. Integrin ITGAV:ITGB3 interacts with FBLN5 (via N-terminus). ITGAV:ITGB3 interacts with CCN3. ITGAV:ITGB3 and ITGA2B:ITGB3 interact with SELP (via C-type lectin domain); the interaction mediates cell-cell interaction and adhesion. ITGAV:ITGB3 is found in a ternary complex with CX3CR1 and CX3CL1. ITGAV:ITGB3 is found in a ternary complex with NRG1 and ERBB3. ITGAV:ITGB3 is found in a ternary complex with FGF1 and FGFR1. ITGAV:ITGB3 interacts with FGF2; it is likely that FGF2 can simultaneously bind ITGAV:ITGB3 and FGF receptors. ITGAV:ITGB3 binds to IL1B. ITGAV:ITGB3 is found in a ternary complex with IGF1 and IGF1R. ITGAV:ITGB3 interacts with IGF2. ITGAV:ITGB3 interacts with FBN1. ITGAV:ITGB3 interacts with CD9, CD81 and CD151 (via second extracellular domain). Interacts (via the allosteric site (site 2)) with CXCL12 in a CXCR4-independent manner. Interacts with MXRA8/DICAM; the interaction inhibits ITGAV:ITGB3 heterodimer formation. ITGAV:ITGB3 interacts with PTN. Forms a complex with PTPRZ1 and PTN that stimulates endothelial cell migration through ITGB3 Tyr-773 phosphorylation. ITGAV:ITGB3 interacts with SLC6A4. Interacts with SLC6A4 (via C-terminus); this interaction regulates SLC6A4 trafficking. ITGA2B:ITGB3 interacts with PPIA/CYPA; the interaction is ROS and PPIase activity-dependent and is increased in the presence of thrombin. Interacts with tensin TNS3; TNS3 also interacts with PEAK1, thus acting as an adapter molecule to bridge the association of PEAK1 with ITGB3. Interacts with TM4SF19. (Microbial infection) Integrin ITGAV:ITGB3 interacts with herpes virus 8/HHV-8 glycoprotein B. In terms of assembly, (Microbial infection) Integrin ITGAV:ITGB3 interacts with coxsackievirus A9 capsid proteins. As to quaternary structure, (Microbial infection) Interacts with Hantaan virus glycoprotein G. (Microbial infection) Integrin ITGAV:ITGB3 interacts with cytomegalovirus/HHV-5 gH:gL proteins. In terms of assembly, (Microbial infection) Integrin ITGA5:ITGB3 interacts with human metapneumovirus fusion protein. As to quaternary structure, (Microbial infection) Integrin ITGAV:ITGB3 interacts with human parechovirus 1 capsid proteins. (Microbial infection) Integrin ITGAV:ITGB3 interacts with west nile virus envelope protein E. In terms of assembly, (Microbial infection) Interacts with HIV-1 Tat. ITGAV:ITGB3 interacts with AGRA2. In terms of processing, phosphorylated on tyrosine residues in response to thrombin-induced platelet aggregation. Probably involved in outside-in signaling. A peptide (AA 740-762) is capable of binding GRB2 only when both Tyr-773 and Tyr-785 are phosphorylated. Phosphorylation of Thr-779 inhibits SHC binding. In terms of tissue distribution, isoform beta-3A and isoform beta-3C are widely expressed. Isoform beta-3A is specifically expressed in osteoblast cells; isoform beta-3C is specifically expressed in prostate and testis.

The protein resides in the cell membrane. It is found in the cell projection. It localises to the lamellipodium membrane. Its subcellular location is the cell junction. The protein localises to the focal adhesion. The protein resides in the postsynaptic cell membrane. It is found in the synapse. Integrin alpha-V/beta-3 (ITGAV:ITGB3) is a receptor for cytotactin, fibronectin, laminin, matrix metalloproteinase-2, osteopontin, osteomodulin, prothrombin, thrombospondin, vitronectin and von Willebrand factor. Integrin alpha-IIb/beta-3 (ITGA2B:ITGB3) is a receptor for fibronectin, fibrinogen, plasminogen, prothrombin, thrombospondin and vitronectin. Integrins alpha-IIb/beta-3 and alpha-V/beta-3 recognize the sequence R-G-D in a wide array of ligands. Integrin alpha-IIb/beta-3 recognizes the sequence H-H-L-G-G-G-A-K-Q-A-G-D-V in fibrinogen gamma chain. Following activation integrin alpha-IIb/beta-3 brings about platelet/platelet interaction through binding of soluble fibrinogen. This step leads to rapid platelet aggregation which physically plugs ruptured endothelial surface. Fibrinogen binding enhances SELP expression in activated platelets. ITGAV:ITGB3 binds to fractalkine (CX3CL1) and acts as its coreceptor in CX3CR1-dependent fractalkine signaling. ITGAV:ITGB3 binds to NRG1 (via EGF domain) and this binding is essential for NRG1-ERBB signaling. ITGAV:ITGB3 binds to FGF1 and this binding is essential for FGF1 signaling. ITGAV:ITGB3 binds to FGF2 and this binding is essential for FGF2 signaling. ITGAV:ITGB3 binds to IGF1 and this binding is essential for IGF1 signaling. ITGAV:ITGB3 binds to IGF2 and this binding is essential for IGF2 signaling. ITGAV:ITGB3 binds to IL1B and this binding is essential for IL1B signaling. ITGAV:ITGB3 binds to PLA2G2A via a site (site 2) which is distinct from the classical ligand-binding site (site 1) and this induces integrin conformational changes and enhanced ligand binding to site 1. ITGAV:ITGB3 acts as a receptor for fibrillin-1 (FBN1) and mediates R-G-D-dependent cell adhesion to FBN1. In brain, plays a role in synaptic transmission and plasticity. Involved in the regulation of the serotonin neurotransmission, is required to localize to specific compartments within the synapse the serotonin receptor SLC6A4 and for an appropriate reuptake of serotonin. Controls excitatory synaptic strength by regulating GRIA2-containing AMPAR endocytosis, which affects AMPAR abundance and composition. ITGAV:ITGB3 act as a receptor for CD40LG. ITGAV:ITGB3 acts as a receptor for IBSP and promotes cell adhesion and migration to IBSP. Its function is as follows. (Microbial infection) Integrin ITGAV:ITGB3 acts as a receptor for Herpes virus 8/HHV-8. Functionally, (Microbial infection) Integrin ITGAV:ITGB3 acts as a receptor for Coxsackievirus A9. In terms of biological role, (Microbial infection) Acts as a receptor for Hantaan virus. (Microbial infection) Integrin ITGAV:ITGB3 acts as a receptor for Cytomegalovirus/HHV-5. Its function is as follows. (Microbial infection) Integrin ITGA5:ITGB3 acts as a receptor for Human metapneumovirus. Functionally, (Microbial infection) Integrin ITGAV:ITGB3 acts aP05556s a receptor for Human parechovirus 1. In terms of biological role, (Microbial infection) Integrin ITGAV:ITGB3 acts as a receptor for West nile virus. (Microbial infection) In case of HIV-1 infection, the interaction with extracellular viral Tat protein seems to enhance angiogenesis in Kaposi's sarcoma lesions. In Homo sapiens (Human), this protein is Integrin beta-3.